The following is a 225-amino-acid chain: UPF0758 protein XCV4028 (225 aa).

The region spanning 102–224 (ALSDPPSVGR…PVSFAERGWL (123 aa)) is the MPN domain. The Zn(2+) site is built by His-173, His-175, and Asp-186. Positions 173-186 (HNHPSGNPEPSEAD) match the JAMM motif motif.

Belongs to the UPF0758 family.

The sequence is that of UPF0758 protein XCV4028 from Xanthomonas euvesicatoria pv. vesicatoria (strain 85-10) (Xanthomonas campestris pv. vesicatoria).